Reading from the N-terminus, the 305-residue chain is Ribosomal protein L11 methyltransferase (305 aa).

The S-adenosyl-L-methionine site is built by Thr-155, Gly-176, Asp-198, and Asn-241.

Belongs to the methyltransferase superfamily. PrmA family.

The protein localises to the cytoplasm. The enzyme catalyses L-lysyl-[protein] + 3 S-adenosyl-L-methionine = N(6),N(6),N(6)-trimethyl-L-lysyl-[protein] + 3 S-adenosyl-L-homocysteine + 3 H(+). Its function is as follows. Methylates ribosomal protein L11. This chain is Ribosomal protein L11 methyltransferase, found in Carboxydothermus hydrogenoformans (strain ATCC BAA-161 / DSM 6008 / Z-2901).